The following is a 180-amino-acid chain: Cytochrome c oxidase assembly protein CtaG (180 aa).

The Cytoplasmic segment spans residues 1 to 8; that stretch reads MSKKSNKS. Residues 9–29 form a helical; Signal-anchor for type II membrane protein membrane-spanning segment; it reads LAFSLLGLIVSMVLLSFAAVP. Residues 30-180 are Periplasmic-facing; it reads LYNLFCKVTG…SFFKVRDVKK (151 aa).

This sequence belongs to the COX11/CtaG family.

Its subcellular location is the cell inner membrane. Exerts its effect at some terminal stage of cytochrome c oxidase synthesis, probably by being involved in the insertion of the copper B into subunit I. This chain is Cytochrome c oxidase assembly protein CtaG, found in Rickettsia bellii (strain RML369-C).